The following is a 519-amino-acid chain: Berghepain-1 (519 aa).

The Cytoplasmic portion of the chain corresponds to 1–32; that stretch reads MINDIRRINITTSSIESLNENSKYLKRNHKRT. The chain crosses the membrane as a helical; Signal-anchor for type II membrane protein span at residues 33–53; sequence IKICAYAITTFALFFIVVVYF. Topologically, residues 54–519 are lumenal; the sequence is KNQTNVNDAN…IGIDVFFPIL (466 aa). 2 N-linked (GlcNAc...) asparagine glycosylation sites follow: asparagine 55 and asparagine 143. Intrachain disulfides connect cysteine 298–cysteine 340, cysteine 333–cysteine 373, cysteine 358–cysteine 378, and cysteine 427–cysteine 508. The active site involves cysteine 301. Asparagine 432 carries N-linked (GlcNAc...) asparagine glycosylation. Residues histidine 433 and asparagine 483 contribute to the active site.

Belongs to the peptidase C1 family.

The protein resides in the membrane. In terms of biological role, cysteine protease. Required for host hepatocyte-derived merozoite infectivity and to a lesser extent for host erythrocyte-derived merozoite infectivity. The chain is Berghepain-1 from Plasmodium berghei (strain Anka).